A 165-amino-acid chain; its full sequence is MKSILRSTTRNLITSSRRFENLKTTEEIRNFLAESTWSINELLKSPTGSSQPEVSPEIVKKMLKLSGLNDLKDDQSVTKALNLQMMFINHLYDNDHETVTPSPKRNENNGIFRLLASDHLPQRPLELNNLLKQINELKPDPSKGEVDFTISDLQRDSFVINKRKE.

A mitochondrion-targeting transit peptide spans 1–19 (MKSILRSTTRNLITSSRRF).

This sequence belongs to the GatF family. In terms of assembly, subunit of the heterotrimeric GatFAB amidotransferase (AdT) complex, composed of A, B and F subunits.

The protein localises to the mitochondrion inner membrane. The catalysed reaction is L-glutamyl-tRNA(Gln) + L-glutamine + ATP + H2O = L-glutaminyl-tRNA(Gln) + L-glutamate + ADP + phosphate + H(+). Functionally, allows the formation of correctly charged Gln-tRNA(Gln) through the transamidation of misacylated Glu-tRNA(Gln) in the mitochondria. The reaction takes place in the presence of glutamine and ATP through an activated gamma-phospho-Glu-tRNA(Gln). Required for proper protein synthesis within the mitochondrion. The protein is Glutamyl-tRNA(Gln) amidotransferase subunit F, mitochondrial of Candida albicans (strain SC5314 / ATCC MYA-2876) (Yeast).